The chain runs to 472 residues: Membrane-bound acylglycerophosphatidylinositol O-acyltransferase MBOAT7 (472 aa).

Topologically, residues 1-5 are cytoplasmic; sequence MSPEE. The helical transmembrane segment at 6–22 threads the bilayer; it reads WTYLVVLLISIPIGFLF. Residues 23–33 lie on the Lumenal side of the membrane; it reads KKAGPGLKRWG. Residues 34–57 traverse the membrane as a helical segment; the sequence is AAAVGLGLTLFTCGPHTLHSLVTI. Residues 58–73 lie on the Cytoplasmic side of the membrane; the sequence is LGTWALIQAQPCSCHA. A helical transmembrane segment spans residues 74–93; sequence LALAWTFSYLLFFRALSLLG. Over 94 to 194 the chain is Lumenal; sequence LPTPTPFTNA…VPSLRPLLRR (101 aa). Residues 195–212 traverse the membrane as a helical segment; that stretch reads AWPAPLFGLLFLLSSHLF. The Cytoplasmic portion of the chain corresponds to 213–231; it reads PLEAVREDAFYARPLPARL. The helical transmembrane segment at 232–261 threads the bilayer; it reads FYMIPVFFAFRMRFYVAWIAAECGCIAAGF. At 262–426 the chain is on the lumenal side; it reads GAYPVAAKAR…LSLADTLRYW (165 aa). Asn321 carries N-linked (GlcNAc...) asparagine glycosylation. A helical membrane pass occupies residues 427-447; it reads ASIYFCIHFLALAALGLGLAL. At 448–472 the chain is on the cytoplasmic side; it reads GGGSPSRRKAASQPTSLAPEKLREE. Residues 453–472 are disordered; it reads SRRKAASQPTSLAPEKLREE.

Belongs to the membrane-bound acyltransferase family. In terms of assembly, interacts with SPTSSA; the interaction facilitates MBOAT7 location to mitochondria-associated membranes (MAMs). In terms of tissue distribution, overexpressed in metastatic breast and bladder carcinomas relative to normal breast epithelium and urothelium.

It is found in the endoplasmic reticulum membrane. The catalysed reaction is a 1-acyl-sn-glycero-3-phospho-(1D-myo-inositol) + (5Z,8Z,11Z,14Z)-eicosatetraenoyl-CoA = a 1-acyl-2-(5Z,8Z,11Z,14Z-eicosatetraenoyl)-sn-glycero-3-phospho-(1D-myo-inositol) + CoA. It carries out the reaction (5Z,8Z,11Z,14Z)-eicosatetraenoyl-CoA + 1-hexadecanoyl-sn-glycero-3-phosphocholine = 1-hexadecanoyl-2-(5Z,8Z,11Z,14Z-eicosatetraenoyl)-sn-glycero-3-phosphocholine + CoA. It catalyses the reaction a 1-acyl-sn-glycero-3-phospho-(1D-myo-inositol) + an acyl-CoA = a 1,2-diacyl-sn-glycero-3-phospho-(1D-myo-inositol) + CoA. The enzyme catalyses 1-octadecanoyl-sn-glycero-3-phospho-(1D-myo-inositol) + (5Z,8Z,11Z,14Z)-eicosatetraenoyl-CoA = 1-octadecanoyl-2-(5Z,8Z,11Z,14Z-eicosatetraenoyl)-sn-glycero-3-phospho-(1D-myo-inositol) + CoA. It participates in lipid metabolism; phospholipid metabolism. Its activity is regulated as follows. Activity is inhibited by thimerosal. Acyltransferase which catalyzes the transfer of an acyl group from an acyl-CoA to a lysophosphatidylinositol (1-acylglycerophosphatidylinositol or LPI) leading to the production of a phosphatidylinositol (1,2-diacyl-sn-glycero-3-phosphoinositol or PI) and participates in the reacylation step of the phospholipid remodeling pathway also known as the Lands cycle. Prefers arachidonoyl-CoA as the acyl donor, thus contributing to the regulation of free levels arachidonic acid in cell. In liver, participates in the regulation of triglyceride metabolism through the phosphatidylinositol acyl-chain remodeling regulation. The chain is Membrane-bound acylglycerophosphatidylinositol O-acyltransferase MBOAT7 from Homo sapiens (Human).